A 277-amino-acid polypeptide reads, in one-letter code: F420-dependent methylenetetrahydromethanopterin dehydrogenase (277 aa).

The protein belongs to the MTD family.

It catalyses the reaction 5,10-methylenetetrahydromethanopterin + oxidized coenzyme F420-(gamma-L-Glu)(n) + 2 H(+) = 5,10-methenyl-5,6,7,8-tetrahydromethanopterin + reduced coenzyme F420-(gamma-L-Glu)(n). It participates in one-carbon metabolism; methanogenesis from CO(2); 5,10-methylene-5,6,7,8-tetrahydromethanopterin from 5,10-methenyl-5,6,7,8-tetrahydromethanopterin (coenzyme F420 route): step 1/1. Catalyzes the reversible reduction of methenyl-H(4)MPT(+) to methylene-H(4)MPT. The polypeptide is F420-dependent methylenetetrahydromethanopterin dehydrogenase (Methanococcus maripaludis (strain C5 / ATCC BAA-1333)).